The chain runs to 78 residues: Large ribosomal subunit protein bL28 (78 aa).

The interval 1–20 (MSRVCQVTGKGPVTGNNISH) is disordered.

This sequence belongs to the bacterial ribosomal protein bL28 family.

In Pseudomonas fluorescens (strain ATCC BAA-477 / NRRL B-23932 / Pf-5), this protein is Large ribosomal subunit protein bL28.